The chain runs to 211 residues: MREFCPLIGVIGRSGAGKNVVSRLLAERGCYCIDADARTRELLESYGDSIVERFQVAAAARGLSLRRKDGGLHSAHLGVLLFSEPKLLQQHEEFLLPKVTRLLCEDIARAQAARPKAIVLNAPTLHKTELLQACSFVLYIWAPSILRMWRCKKRERVSFTHLLRRFSAQKGFYAQSIAQNADTYTVANCGRVASLARKVDCILTRRGVLGE.

Residues L7–E211 enclose the DPCK domain. An ATP-binding site is contributed by G15 to V20.

Belongs to the CoaE family.

The protein localises to the cytoplasm. The enzyme catalyses 3'-dephospho-CoA + ATP = ADP + CoA + H(+). It functions in the pathway cofactor biosynthesis; coenzyme A biosynthesis; CoA from (R)-pantothenate: step 5/5. Functionally, catalyzes the phosphorylation of the 3'-hydroxyl group of dephosphocoenzyme A to form coenzyme A. This is Dephospho-CoA kinase from Treponema pallidum (strain Nichols).